A 197-amino-acid polypeptide reads, in one-letter code: UPF0056 inner membrane protein YhgN (197 aa).

The Periplasmic segment spans residues 1 to 3; sequence MNE. Residues 4 to 24 traverse the membrane as a helical segment; the sequence is IISAAVLLILIMDPLGNLPIF. At 25 to 44 the chain is on the cytoplasmic side; the sequence is MSVLKHTEPKRRRAIMVREL. The chain crosses the membrane as a helical span at residues 45–65; sequence LIALLVMLVFLFAGEKILAFL. Residues 66-71 are Periplasmic-facing; the sequence is SLRAET. The chain crosses the membrane as a helical span at residues 72–92; the sequence is VSISGGIILFLIAIKMIFPSA. Residues 93-105 are Cytoplasmic-facing; sequence SGNSSGLPAGEEP. A helical membrane pass occupies residues 106–126; sequence FIVPLAIPLVAGPTILATLML. Residues 127-138 lie on the Periplasmic side of the membrane; it reads LSHQYPNQMGHL. A helical membrane pass occupies residues 139-159; that stretch reads VIALLLAWGGTFVILLQSSLF. Residues 160-173 lie on the Cytoplasmic side of the membrane; the sequence is LRLLGEKGVNALER. The helical transmembrane segment at 174–194 threads the bilayer; it reads LMGLILVMMATQMFLDGIRMW. At 195–197 the chain is on the periplasmic side; sequence MKG.

This sequence belongs to the UPF0056 (MarC) family.

Its subcellular location is the cell inner membrane. The protein is UPF0056 inner membrane protein YhgN (yhgN) of Escherichia coli O157:H7.